The chain runs to 221 residues: Lipoprotein-releasing system ATP-binding protein LolD (221 aa).

The 215-residue stretch at 6–220 (LILKNISKHY…YKLKHRLLNI (215 aa)) folds into the ABC transporter domain. 42–49 (GSSGSGKS) is a binding site for ATP.

The protein belongs to the ABC transporter superfamily. Lipoprotein translocase (TC 3.A.1.125) family. The complex is composed of two ATP-binding proteins (LolD) and two transmembrane proteins (LolC and LolE).

It localises to the cell inner membrane. Part of the ABC transporter complex LolCDE involved in the translocation of mature outer membrane-directed lipoproteins, from the inner membrane to the periplasmic chaperone, LolA. Responsible for the formation of the LolA-lipoprotein complex in an ATP-dependent manner. This is Lipoprotein-releasing system ATP-binding protein LolD from Rickettsia conorii (strain ATCC VR-613 / Malish 7).